The sequence spans 309 residues: Beta-ketoacyl-[acyl-carrier-protein] synthase III (309 aa).

Residues Cys111 and His236 contribute to the active site. An ACP-binding region spans residues 237–241 (QANVR). Asn266 is a catalytic residue.

Belongs to the thiolase-like superfamily. FabH family. Homodimer.

The protein resides in the cytoplasm. It carries out the reaction malonyl-[ACP] + acetyl-CoA + H(+) = 3-oxobutanoyl-[ACP] + CO2 + CoA. The protein operates within lipid metabolism; fatty acid biosynthesis. Functionally, catalyzes the condensation reaction of fatty acid synthesis by the addition to an acyl acceptor of two carbons from malonyl-ACP. Catalyzes the first condensation reaction which initiates fatty acid synthesis and may therefore play a role in governing the total rate of fatty acid production. Possesses both acetoacetyl-ACP synthase and acetyl transacylase activities. Its substrate specificity determines the biosynthesis of branched-chain and/or straight-chain of fatty acids. This is Beta-ketoacyl-[acyl-carrier-protein] synthase III from Aquifex aeolicus (strain VF5).